Reading from the N-terminus, the 178-residue chain is Caveolin-1 (178 aa).

Ser2 is subject to N-acetylserine. Ser2 is modified (phosphoserine). The interval 2–94 (SGGKYVDSEG…WKASFTTFTV (93 aa)) is required for homooligomerization. At 2 to 104 (SGGKYVDSEG…TKYWFYRLLS (103 aa)) the chain is on the cytoplasmic side. An N6-acetyllysine; alternate modification is found at Lys5. A Glycyl lysine isopeptide (Lys-Gly) (interchain with G-Cter in ubiquitin); alternate cross-link involves residue Lys5. Tyr6 bears the Phosphotyrosine mark. Residue Ser9 is modified to Phosphoserine. Tyr14 is modified (phosphotyrosine; by ABL1). Tyr25 carries the post-translational modification Phosphotyrosine. Residues Lys26, Lys30, Lys39, Lys47, and Lys57 each participate in a glycyl lysine isopeptide (Lys-Gly) (interchain with G-Cter in ubiquitin) cross-link. Positions 82–94 (DGIWKASFTTFTV) are interaction with CAVIN3. An intramembrane region (helical) is located at residues 105–125 (ALFGIPMALIWGIYFAILSFL). Residues 126 to 178 (HIWAVVPCIKSFLIEIQCISRVYSIYVHTFCDPLFEAIGKIFSNVRINLQKEI) lie on the Cytoplasmic side of the membrane. The interacts with SPRY1, SPRY2, SPRY3 and SPRY4 stretch occupies residues 131 to 142 (VPCIKSFLIEIQ). Residues Cys133, Cys143, and Cys156 are each lipidated (S-palmitoyl cysteine). The segment at 149 to 160 (SIYVHTFCDPLF) is interacts with SPRY1, SPRY2, and SPRY4. The tract at residues 167 to 178 (FSNVRINLQKEI) is interacts with SPRY1, SPRY2, SPRY3 and SPRY4.

The protein belongs to the caveolin family. In terms of assembly, homooligomer. Interacts with GLIPR2. Interacts with NOSTRIN. Interacts with SNAP25 and STX1A. Interacts (via the N-terminus) with DPP4; the interaction is direct. Interacts with CTNNB1, CDH1 and JUP. Interacts with PACSIN2; this interaction induces membrane tubulation. Interacts with SLC7A9. Interacts with BMX and BTK. Interacts with TGFBR1. Interacts with CAVIN3 (via leucine-zipper domain) in a cholesterol-sensitive manner. Interacts with CAVIN1. Interacts with EHD2 in a cholesterol-dependent manner. Forms a ternary complex with UBXN6 and VCP; mediates CAV1 targeting to lysosomes for degradation. Interacts with ABCG1; this interaction regulates ABCG1-mediated cholesterol efflux. Interacts with NEU3; this interaction enhances NEU3 sialidase activity within caveola. Interacts (via C-terminus) with SPRY1, SPRY2 (via C-terminus), SPRY3, and SPRY4. Interacts with IGFBP5; this interaction allows trafficking of IGFBP5 from the plasma membrane to the nucleus. In terms of processing, phosphorylated at Tyr-14 by ABL1 in response to oxidative stress. Post-translationally, ubiquitinated. Undergo monoubiquitination and multi- and/or polyubiquitination. Monoubiquitination of N-terminal lysines promotes integration in a ternary complex with UBXN6 and VCP which promotes oligomeric CAV1 targeting to lysosomes for degradation. Ubiquitinated by ZNRF1; leading to degradation and modulation of the TLR4-mediated immune response.

It is found in the golgi apparatus membrane. The protein localises to the cell membrane. The protein resides in the membrane. Its subcellular location is the caveola. It localises to the membrane raft. Functionally, may act as a scaffolding protein within caveolar membranes. Forms a stable heterooligomeric complex with CAV2 that targets to lipid rafts and drives caveolae formation. Mediates the recruitment of CAVIN proteins (CAVIN1/2/3/4) to the caveolae. Interacts directly with G-protein alpha subunits and can functionally regulate their activity. Involved in the costimulatory signal essential for T-cell receptor (TCR)-mediated T-cell activation. Its binding to DPP4 induces T-cell proliferation and NF-kappa-B activation in a T-cell receptor/CD3-dependent manner. Recruits CTNNB1 to caveolar membranes and may regulate CTNNB1-mediated signaling through the Wnt pathway. Negatively regulates TGFB1-mediated activation of SMAD2/3 by mediating the internalization of TGFBR1 from membrane rafts leading to its subsequent degradation. Binds 20(S)-hydroxycholesterol (20(S)-OHC). This Equus caballus (Horse) protein is Caveolin-1 (CAV1).